The chain runs to 316 residues: Pantothenate kinase (316 aa).

95–102 (GSVAVGKS) provides a ligand contact to ATP.

This sequence belongs to the prokaryotic pantothenate kinase family.

The protein resides in the cytoplasm. It carries out the reaction (R)-pantothenate + ATP = (R)-4'-phosphopantothenate + ADP + H(+). It functions in the pathway cofactor biosynthesis; coenzyme A biosynthesis; CoA from (R)-pantothenate: step 1/5. The polypeptide is Pantothenate kinase (Yersinia enterocolitica serotype O:8 / biotype 1B (strain NCTC 13174 / 8081)).